A 230-amino-acid polypeptide reads, in one-letter code: ATP synthase subunit a (230 aa).

The next 5 helical transmembrane spans lie at 17–37 (LPIT…FIMA), 78–98 (IFPF…IGVI), 107–127 (DLSV…WFGI), 165–187 (LFGN…GFLV), and 198–218 (EAII…AGGI).

Belongs to the ATPase A chain family. F-type ATPases have 2 components, CF(1) - the catalytic core - and CF(0) - the membrane proton channel. CF(1) has five subunits: alpha(3), beta(3), gamma(1), delta(1), epsilon(1). CF(0) has three main subunits: a(1), b(2) and c(9-12). The alpha and beta chains form an alternating ring which encloses part of the gamma chain. CF(1) is attached to CF(0) by a central stalk formed by the gamma and epsilon chains, while a peripheral stalk is formed by the delta and b chains.

The protein resides in the cell inner membrane. In terms of biological role, key component of the proton channel; it plays a direct role in the translocation of protons across the membrane. The polypeptide is ATP synthase subunit a (Legionella pneumophila subsp. pneumophila (strain Philadelphia 1 / ATCC 33152 / DSM 7513)).